The primary structure comprises 190 residues: Peptidyl-tRNA hydrolase (190 aa).

Tyrosine 14 lines the tRNA pocket. The active-site Proton acceptor is the histidine 19. TRNA is bound by residues tyrosine 64, asparagine 66, and asparagine 112.

The protein belongs to the PTH family. In terms of assembly, monomer.

The protein resides in the cytoplasm. It carries out the reaction an N-acyl-L-alpha-aminoacyl-tRNA + H2O = an N-acyl-L-amino acid + a tRNA + H(+). Functionally, hydrolyzes ribosome-free peptidyl-tRNAs (with 1 or more amino acids incorporated), which drop off the ribosome during protein synthesis, or as a result of ribosome stalling. In terms of biological role, catalyzes the release of premature peptidyl moieties from peptidyl-tRNA molecules trapped in stalled 50S ribosomal subunits, and thus maintains levels of free tRNAs and 50S ribosomes. The chain is Peptidyl-tRNA hydrolase from Chlorobium limicola (strain DSM 245 / NBRC 103803 / 6330).